The primary structure comprises 118 residues: Evasin P1080 (118 aa).

The signal sequence occupies residues 1 to 19; the sequence is FFQLAVFVVILFNINLLSA. Cystine bridges form between Cys41-Cys60, Cys45-Cys62, and Cys56-Cys73. Asn44 carries an N-linked (GlcNAc...) asparagine glycan. Asn67 and Asn104 each carry an N-linked (GlcNAc...) asparagine glycan.

The protein localises to the secreted. Functionally, salivary chemokine-binding protein which binds to host chemokines CXCL1, CXCL2, CXCL3, CXCL4, CXCL5, CXCL6, CXCL10, CXCL11 and CXCL13. This chain is Evasin P1080, found in Ixodes ricinus (Common tick).